A 145-amino-acid chain; its full sequence is Small ribosomal subunit protein uS19 (145 aa).

This sequence belongs to the universal ribosomal protein uS19 family. As to quaternary structure, component of the small ribosomal subunit.

The protein resides in the cytoplasm. In terms of biological role, component of the small ribosomal subunit. The ribosome is a large ribonucleoprotein complex responsible for the synthesis of proteins in the cell. The sequence is that of Small ribosomal subunit protein uS19 (rps15) from Xenopus laevis (African clawed frog).